Consider the following 77-residue polypeptide: uncharacterized protein (77 aa).

This is an uncharacterized protein from Orgyia pseudotsugata multicapsid polyhedrosis virus (OpMNPV).